Here is a 685-residue protein sequence, read N- to C-terminus: Cilia- and flagella-associated protein 36 (685 aa).

Positions 1 to 20 are disordered; that stretch reads MLRRFSKKNKNPEGGSDDAS. The stretch at 197 to 242 forms a coiled coil; sequence SEELEMMAQNSRIQREALEQEIRKEEILLQQALDEGARAQNQNQNQ. A compositionally biased stretch (low complexity) spans 287–310; it reads TGTMTSSTGVSVGTLTNTGVSSGT. A disordered region spans residues 287–573; it reads TGTMTSSTGV…LRGNKYDGDV (287 aa). Positions 363–372 are enriched in basic and acidic residues; sequence EAEKSKRERP. Residues 410 to 434 show a composition bias toward polar residues; that stretch reads GTTSKKSIATVTASPEMSSKTTQME. Basic and acidic residues-rich tracts occupy residues 439 to 456 and 508 to 557; these read GEGK…ERKY and HEPR…ESKP.

This sequence belongs to the CFAP36 family. In terms of tissue distribution, expressed in amphid and phasmid ciliated neurons.

It localises to the cell projection. Its subcellular location is the cilium. The protein localises to the cytoplasm. The protein resides in the cytoskeleton. It is found in the cilium axoneme. The protein is Cilia- and flagella-associated protein 36 of Caenorhabditis elegans.